The primary structure comprises 245 residues: Carboxy-S-adenosyl-L-methionine synthase (245 aa).

Residues tyrosine 42, 67–69 (GCS), 92–93 (DN), 120–121 (DI), asparagine 135, and arginine 202 contribute to the S-adenosyl-L-methionine site.

It belongs to the class I-like SAM-binding methyltransferase superfamily. Cx-SAM synthase family. In terms of assembly, homodimer.

The enzyme catalyses prephenate + S-adenosyl-L-methionine = carboxy-S-adenosyl-L-methionine + 3-phenylpyruvate + H2O. Catalyzes the conversion of S-adenosyl-L-methionine (SAM) to carboxy-S-adenosyl-L-methionine (Cx-SAM). The chain is Carboxy-S-adenosyl-L-methionine synthase from Vibrio parahaemolyticus serotype O3:K6 (strain RIMD 2210633).